The following is a 515-amino-acid chain: Bifunctional pantoate ligase/cytidylate kinase (515 aa).

The pantoate--beta-alanine ligase stretch occupies residues 1 to 279 (MKVVETVARL…VGSTRLIDNV (279 aa)). Residue 31–38 (MGALHEGH) participates in ATP binding. His-38 (proton donor) is an active-site residue. (R)-pantoate is bound at residue Gln-62. Gln-62 is a beta-alanine binding site. 149–152 (GQKD) contacts ATP. Position 155 (Gln-155) interacts with (R)-pantoate. ATP is bound by residues Val-178 and 186 to 189 (LSSR). Residues 280 to 515 (VLGQHHERRP…LYRDKVGGSV (236 aa)) are cytidylate kinase.

This sequence in the N-terminal section; belongs to the pantothenate synthetase family. In the C-terminal section; belongs to the cytidylate kinase family. Type 1 subfamily.

It localises to the cytoplasm. The enzyme catalyses (R)-pantoate + beta-alanine + ATP = (R)-pantothenate + AMP + diphosphate + H(+). It carries out the reaction CMP + ATP = CDP + ADP. It catalyses the reaction dCMP + ATP = dCDP + ADP. It participates in cofactor biosynthesis; (R)-pantothenate biosynthesis; (R)-pantothenate from (R)-pantoate and beta-alanine: step 1/1. Catalyzes the condensation of pantoate with beta-alanine in an ATP-dependent reaction via a pantoyl-adenylate intermediate. Functionally, catalyzes the transfer of a phosphate group from ATP to either CMP or dCMP to form CDP or dCDP and ADP, respectively. This chain is Bifunctional pantoate ligase/cytidylate kinase, found in Gloeobacter violaceus (strain ATCC 29082 / PCC 7421).